A 239-amino-acid polypeptide reads, in one-letter code: 7-cyano-7-deazaguanine synthase (239 aa).

Residue 13 to 23 participates in ATP binding; it reads FSGGQDSTTCL. The Zn(2+) site is built by Cys-192, Cys-201, Cys-204, and Cys-207.

The protein belongs to the QueC family. It depends on Zn(2+) as a cofactor.

The catalysed reaction is 7-carboxy-7-deazaguanine + NH4(+) + ATP = 7-cyano-7-deazaguanine + ADP + phosphate + H2O + H(+). It functions in the pathway purine metabolism; 7-cyano-7-deazaguanine biosynthesis. Catalyzes the ATP-dependent conversion of 7-carboxy-7-deazaguanine (CDG) to 7-cyano-7-deazaguanine (preQ(0)). This is 7-cyano-7-deazaguanine synthase from Shewanella sp. (strain MR-4).